Here is a 729-residue protein sequence, read N- to C-terminus: E3 ubiquitin-protein ligase SH3RF2 (729 aa).

The RING-type zinc finger occupies 12 to 53; the sequence is CPVCFEKLDVTAKVLPCQHTFCKPCLQRVFKAHKELRCPECR. A disordered region spans residues 78–105; it reads SGQSSGRGGSFRRPGTMTLQDGRKSRTN. SH3 domains are found at residues 125–184 and 187–252; these read DGVP…VIKQ and QPPP…PNLT. The disordered stretch occupies residues 258-297; sequence EKNKGRQSSRTKNLSLVSSSSRGNTSTLRRGPGSRRKVPG. Over residues 263-285 the composition is skewed to polar residues; the sequence is RQSSRTKNLSLVSSSSRGNTSTL. Positions 370 to 459 are interaction with PAK4; sequence VVSLPGSQQH…RSPGLYTTWT (90 aa). Residues 380–441 form the SH3 3 domain; the sequence is LSANMFVALH…PNNYVIPIFR (62 aa). Disordered regions lie at residues 497–526 and 610–677; these read STAG…QRPL and KSEP…SQPE. Polar residues predominate over residues 517-526; that stretch reads RKNGSLQRPL. The interval 641–646 is interaction with PPP1CA; it reads KTVRFQ. Serine 649 bears the Phosphoserine mark.

It belongs to the SH3RF family. Interacts with FASLG and PPP1CA. Interacts with PAK4 and TNFRSF1A. Interacts with DLK1, MAP3K10/MLK2, MAPK8IP1/JIP1, MAPK8IP2/JIP2 and MAPK8IP3/JIP3. Interacts with RAC1 (both active GTP- or inactive GDP-bound forms). Post-translationally, autoubiquitinated. As to expression, heart (at protein level). Up-regulated in colon cancer tissues as compared to normal colon tissues (at protein level). Testis. In the heart, present in the apex, left atrium, right atrium, left ventricle and right ventricle, but not in the aorta.

The protein resides in the nucleus. It carries out the reaction S-ubiquitinyl-[E2 ubiquitin-conjugating enzyme]-L-cysteine + [acceptor protein]-L-lysine = [E2 ubiquitin-conjugating enzyme]-L-cysteine + N(6)-ubiquitinyl-[acceptor protein]-L-lysine.. Its pathway is protein modification; protein ubiquitination. Functionally, has E3 ubiquitin-protein ligase activity. Acts as an anti-apoptotic regulator of the JNK pathway by ubiquitinating and promoting the degradation of SH3RF1, a scaffold protein that is required for pro-apoptotic JNK activation. Facilitates TNF-alpha-mediated recruitment of adapter proteins TRADD and RIPK1 to TNFRSF1A and regulates PAK4 protein stability via inhibition of its ubiquitin-mediated proteasomal degradation. Inhibits PPP1CA phosphatase activity. This chain is E3 ubiquitin-protein ligase SH3RF2 (SH3RF2), found in Homo sapiens (Human).